The sequence spans 219 residues: Phosphatidylinositol phosphate synthase (219 aa).

An a CDP-1,2-diacyl-sn-glycerol-binding site is contributed by 29-32 (NQLT). Transmembrane regions (helical) follow at residues 31–47 (LTLV…LLLI) and 53–72 (IWAA…DGTV). Mg(2+) is bound by residues aspartate 66 and aspartate 69. A CDP-1,2-diacyl-sn-glycerol is bound by residues glycine 70, arginine 74, and threonine 80. Residues aspartate 87 and aspartate 91 each contribute to the Mg(2+) site. The active-site Proton acceptor is the aspartate 91. 4 helical membrane passes run 93-110 (ITDG…VYSY), 116-133 (LVAA…ISYV), 154-171 (RLIV…GVPY), and 177-194 (LWAL…RLVM).

The protein belongs to the CDP-alcohol phosphatidyltransferase class-I family. As to quaternary structure, homodimer. Mg(2+) is required as a cofactor.

It is found in the cell membrane. The catalysed reaction is a CDP-1,2-diacyl-sn-glycerol + 1D-myo-inositol 3-phosphate = a 1,2-diacyl-sn-glycero-3-phospho-(1D-myo-inositol-3-phosphate) + CMP + H(+). The enzyme catalyses 1,2-di-(9Z-octadecenoyl)-sn-glycero-3-cytidine-5'-diphosphate + 1D-myo-inositol 3-phosphate = 1,2-di-(9Z-octadecenoyl)-sn-glycero-3-phospho-(1D-myo-inositol-3-phosphate) + CMP + H(+). The protein operates within phospholipid metabolism; phosphatidylinositol phosphate biosynthesis. Its function is as follows. Catalyzes the conjugation of the 1'-hydroxyl group of D-myo-inositol-3-phosphate (also named L-myo-inositol-1-phosphate) with a lipid tail of cytidine diphosphate diacylglycerol (CDP-DAG), forming phosphatidylinositol phosphate (PIP) and CMP. PIP is a precursor of phosphatidylinositol (PI) which is an essential lipid required for cell wall formation. In Corynebacterium glutamicum (strain ATCC 13032 / DSM 20300 / JCM 1318 / BCRC 11384 / CCUG 27702 / LMG 3730 / NBRC 12168 / NCIMB 10025 / NRRL B-2784 / 534), this protein is Phosphatidylinositol phosphate synthase.